Consider the following 153-residue polypeptide: uncharacterized protein (153 aa).

Helical transmembrane passes span 17-37 (ITLI…SMFF), 44-64 (FLLC…IGMG), and 118-138 (FVFI…TLII).

To M.jannaschii MJ0129 and MJ0554.

The protein localises to the cell membrane. This is an uncharacterized protein from Methanocaldococcus jannaschii (strain ATCC 43067 / DSM 2661 / JAL-1 / JCM 10045 / NBRC 100440) (Methanococcus jannaschii).